A 120-amino-acid polypeptide reads, in one-letter code: Chaperonin GroEL (120 aa).

23 to 27 (DGTTT) serves as a coordination point for ATP.

It belongs to the chaperonin (HSP60) family. In terms of assembly, forms a cylinder of 14 subunits composed of two heptameric rings stacked back-to-back. Interacts with the co-chaperonin GroES.

Its subcellular location is the cytoplasm. The enzyme catalyses ATP + H2O + a folded polypeptide = ADP + phosphate + an unfolded polypeptide.. In terms of biological role, together with its co-chaperonin GroES, plays an essential role in assisting protein folding. The GroEL-GroES system forms a nano-cage that allows encapsulation of the non-native substrate proteins and provides a physical environment optimized to promote and accelerate protein folding. This chain is Chaperonin GroEL, found in Mycolicibacter nonchromogenicus (Mycobacterium nonchromogenicum).